Reading from the N-terminus, the 379-residue chain is Alkanesulfonate monooxygenase (379 aa).

The protein belongs to the SsuD family.

It catalyses the reaction an alkanesulfonate + FMNH2 + O2 = an aldehyde + FMN + sulfite + H2O + 2 H(+). Its function is as follows. Catalyzes the desulfonation of aliphatic sulfonates. This Sorangium cellulosum (strain So ce56) (Polyangium cellulosum (strain So ce56)) protein is Alkanesulfonate monooxygenase.